Reading from the N-terminus, the 493-residue chain is MTEAKGDIGLIGLAVMGENLVLNMESRGFTCSVYNRTTSKVDEFVQGRGKGKKFIGCHSLETLVQSLKTPRRVMLMVKAGEVVDHFIQLLLPLLEKGDIIIDGGNSLYTDSDRRTKDLDAKGILFIGTGVSGGEEGALLGPSIMPGGNPKAWEHVKPIFQAISAKVQPGDQPCCDWVGDGGAGHYVKMVHNGIEYGDMQLISEAYFILKHYLGLSNDELQKTFAKWNTGDLDSYLIEITADIFAKKCEKDPNTYVVDTILDSAGQKGTGKWTAINALDVGIPLTLVAESVFARCVSSFKEERVKASTILAGPNPNEANKKFTGDKEQVIEAVRQALFASKLVSYAQGFTMMKAAAKEYKWNLNYGNIALLWRGGCIIRSTFLGEIKGAFDKNPQLDNLLTDCWFRDKLAAAQDGWRQVASISVLHGIPTPAFTSALSYYDSYRCAKLSANLVQAQRDYFGAHTFQLLDDPKGAPVHVNWTGRGGSTHSTTYSI.

Residues 12-17 (GLAVMG), 35-37 (NRT), 77-79 (VKA), and N105 each bind NADP(+). Residues N105 and 131–133 (SGG) each bind substrate. K187 acts as the Proton acceptor in catalysis. 190-191 (HN) contributes to the substrate binding site. The active-site Proton donor is E194. Residues Y195, K266, R293, R456, and H462 each contribute to the substrate site.

This sequence belongs to the 6-phosphogluconate dehydrogenase family. As to quaternary structure, homodimer.

The catalysed reaction is 6-phospho-D-gluconate + NADP(+) = D-ribulose 5-phosphate + CO2 + NADPH. Its pathway is carbohydrate degradation; pentose phosphate pathway; D-ribulose 5-phosphate from D-glucose 6-phosphate (oxidative stage): step 3/3. Its function is as follows. Catalyzes the oxidative decarboxylation of 6-phosphogluconate to ribulose 5-phosphate and CO(2), with concomitant reduction of NADP to NADPH. The chain is 6-phosphogluconate dehydrogenase, decarboxylating (gnd) from Dictyostelium discoideum (Social amoeba).